We begin with the raw amino-acid sequence, 326 residues long: MPPSISAFQAAYIGIEVLIALVSVPGNVLVIWAVKVNQALRDATFCFIVSLAVADVAVGALVIPLAILINIGPQTYFHTCLMVACPVLILTQSSILALLAIAVDRYLRVKIPLRYKMVVTPRRAAVAIAGCWILSFVVGLTPMFGWNNLSAVERAWAANGSMGEPVIKCEFEKVISMEYMVYFNFFVWVLPPLLLMVLIYLEVFYLIRKQLNKKVSASSGDPQKYYGKELKIAKSLALILFLFALSWLPLHILNCITLFCPSCHKPSILTYIAIFLTHGNSAMNPIVYAFRIQKFRVTFLKIWNDHFRCQPAPPIDEDLPEERPDD.

Topologically, residues 1 to 10 are extracellular; the sequence is MPPSISAFQA. The chain crosses the membrane as a helical span at residues 11–33; sequence AYIGIEVLIALVSVPGNVLVIWA. Residues 34–46 lie on the Cytoplasmic side of the membrane; that stretch reads VKVNQALRDATFC. Residues 47–69 form a helical membrane-spanning segment; the sequence is FIVSLAVADVAVGALVIPLAILI. The Extracellular portion of the chain corresponds to 70-80; sequence NIGPQTYFHTC. Cysteine 80 and cysteine 169 form a disulfide bridge. Residues 81–102 traverse the membrane as a helical segment; it reads LMVACPVLILTQSSILALLAIA. Topologically, residues 103-123 are cytoplasmic; that stretch reads VDRYLRVKIPLRYKMVVTPRR. The helical transmembrane segment at 124-146 threads the bilayer; sequence AAVAIAGCWILSFVVGLTPMFGW. Residues 147–176 are Extracellular-facing; sequence NNLSAVERAWAANGSMGEPVIKCEFEKVIS. The N-linked (GlcNAc...) asparagine glycan is linked to asparagine 159. A helical membrane pass occupies residues 177 to 201; that stretch reads MEYMVYFNFFVWVLPPLLLMVLIYL. At 202 to 235 the chain is on the cytoplasmic side; that stretch reads EVFYLIRKQLNKKVSASSGDPQKYYGKELKIAKS. A helical transmembrane segment spans residues 236–259; sequence LALILFLFALSWLPLHILNCITLF. Residues 260 to 267 are Extracellular-facing; sequence CPSCHKPS. A helical transmembrane segment spans residues 268–292; the sequence is ILTYIAIFLTHGNSAMNPIVYAFRI. The Cytoplasmic portion of the chain corresponds to 293-326; it reads QKFRVTFLKIWNDHFRCQPAPPIDEDLPEERPDD. A lipid anchor (S-palmitoyl cysteine) is attached at cysteine 309.

Belongs to the G-protein coupled receptor 1 family.

The protein resides in the cell membrane. In terms of biological role, receptor for adenosine. The activity of this receptor is mediated by G proteins which inhibit adenylyl cyclase. The sequence is that of Adenosine receptor A1 (ADORA1) from Homo sapiens (Human).